The sequence spans 502 residues: Glycerol kinase (502 aa).

Thr14 provides a ligand contact to ADP. ATP contacts are provided by Thr14, Thr15, and Ser16. A sn-glycerol 3-phosphate-binding site is contributed by Thr14. ADP is bound at residue Arg18. Sn-glycerol 3-phosphate contacts are provided by Arg84, Glu85, Tyr136, and Asp246. Residues Arg84, Glu85, Tyr136, Asp246, and Gln247 each contribute to the glycerol site. The ADP site is built by Thr268 and Gly311. Residues Thr268, Gly311, Gln315, and Gly412 each coordinate ATP. 2 residues coordinate ADP: Gly412 and Asn416.

Belongs to the FGGY kinase family. In terms of assembly, homotetramer and homodimer (in equilibrium). Heterodimer with EIIA-Glc. Binds 1 zinc ion per glycerol kinase EIIA-Glc dimer. The zinc ion is important for dimerization.

The enzyme catalyses glycerol + ATP = sn-glycerol 3-phosphate + ADP + H(+). Its pathway is polyol metabolism; glycerol degradation via glycerol kinase pathway; sn-glycerol 3-phosphate from glycerol: step 1/1. With respect to regulation, activity of this regulatory enzyme is affected by several metabolites. Allosterically and non-competitively inhibited by fructose 1,6-bisphosphate (FBP) and unphosphorylated phosphocarrier protein EIIA-Glc (III-Glc), an integral component of the bacterial phosphotransferase (PTS) system. Its function is as follows. Key enzyme in the regulation of glycerol uptake and metabolism. Catalyzes the phosphorylation of glycerol to yield sn-glycerol 3-phosphate. This Shigella dysenteriae serotype 1 (strain Sd197) protein is Glycerol kinase.